The chain runs to 270 residues: Putative pyruvate, phosphate dikinase regulatory protein (270 aa).

ADP is bound at residue 149–156 (GVSRTSKT).

Belongs to the pyruvate, phosphate/water dikinase regulatory protein family. PDRP subfamily.

It catalyses the reaction N(tele)-phospho-L-histidyl/L-threonyl-[pyruvate, phosphate dikinase] + ADP = N(tele)-phospho-L-histidyl/O-phospho-L-threonyl-[pyruvate, phosphate dikinase] + AMP + H(+). The catalysed reaction is N(tele)-phospho-L-histidyl/O-phospho-L-threonyl-[pyruvate, phosphate dikinase] + phosphate + H(+) = N(tele)-phospho-L-histidyl/L-threonyl-[pyruvate, phosphate dikinase] + diphosphate. Its function is as follows. Bifunctional serine/threonine kinase and phosphorylase involved in the regulation of the pyruvate, phosphate dikinase (PPDK) by catalyzing its phosphorylation/dephosphorylation. This Sphingopyxis alaskensis (strain DSM 13593 / LMG 18877 / RB2256) (Sphingomonas alaskensis) protein is Putative pyruvate, phosphate dikinase regulatory protein.